The following is a 610-amino-acid chain: UvrABC system protein C (610 aa).

The GIY-YIG domain occupies 16 to 94; that stretch reads SQPGVYRMYD…IKLYQPRYNV (79 aa). One can recognise a UVR domain in the interval 204 to 239; sequence DQVLTQLIARMEKASQDLAFEEAARIRDQIQAVRRV.

This sequence belongs to the UvrC family. Interacts with UvrB in an incision complex.

It localises to the cytoplasm. Its function is as follows. The UvrABC repair system catalyzes the recognition and processing of DNA lesions. UvrC both incises the 5' and 3' sides of the lesion. The N-terminal half is responsible for the 3' incision and the C-terminal half is responsible for the 5' incision. This chain is UvrABC system protein C, found in Salmonella paratyphi A (strain ATCC 9150 / SARB42).